The primary structure comprises 300 residues: 4-diphosphocytidyl-2-C-methyl-D-erythritol kinase (300 aa).

Residue Lys-17 is part of the active site. Residue 102 to 112 (PVAAGIGGGSA) participates in ATP binding. Asp-144 is an active-site residue.

This sequence belongs to the GHMP kinase family. IspE subfamily.

It carries out the reaction 4-CDP-2-C-methyl-D-erythritol + ATP = 4-CDP-2-C-methyl-D-erythritol 2-phosphate + ADP + H(+). It functions in the pathway isoprenoid biosynthesis; isopentenyl diphosphate biosynthesis via DXP pathway; isopentenyl diphosphate from 1-deoxy-D-xylulose 5-phosphate: step 3/6. Catalyzes the phosphorylation of the position 2 hydroxy group of 4-diphosphocytidyl-2C-methyl-D-erythritol. In Bradyrhizobium sp. (strain ORS 278), this protein is 4-diphosphocytidyl-2-C-methyl-D-erythritol kinase.